The sequence spans 401 residues: Nicotinate phosphoribosyltransferase (401 aa).

Phosphohistidine; by autocatalysis is present on His-224.

Belongs to the NAPRTase family. Post-translationally, transiently phosphorylated on a His residue during the reaction cycle. Phosphorylation strongly increases the affinity for substrates and increases the rate of nicotinate D-ribonucleotide production. Dephosphorylation regenerates the low-affinity form of the enzyme, leading to product release.

The enzyme catalyses nicotinate + 5-phospho-alpha-D-ribose 1-diphosphate + ATP + H2O = nicotinate beta-D-ribonucleotide + ADP + phosphate + diphosphate. It participates in cofactor biosynthesis; NAD(+) biosynthesis; nicotinate D-ribonucleotide from nicotinate: step 1/1. Functionally, catalyzes the synthesis of beta-nicotinate D-ribonucleotide from nicotinate and 5-phospho-D-ribose 1-phosphate at the expense of ATP. The sequence is that of Nicotinate phosphoribosyltransferase from Pseudomonas putida (strain GB-1).